Here is a 3579-residue protein sequence, read N- to C-terminus: Protocadherin-like wing polarity protein stan (3579 aa).

A signal peptide spans 1–29; sequence MQTREFPQRPLGLLLVLLVVLLQSSLIKS. Over 30 to 2816 the chain is Extracellular; sequence YLIIVHEDTP…EPSLLVQITS (2787 aa). Residues asparagine 46, asparagine 179, and asparagine 340 are each glycosylated (N-linked (GlcNAc...) asparagine). Cadherin domains lie at 360–464, 465–581, 582–689, 690–794, 795–897, 898–1007, 1008–1113, and 1114–1220; these read EQAL…SPTF, EAEQ…YPQF, SERT…APRF, YTSQ…DPAF, NPKY…APIF, ENAP…APAF, KSPL…PPTF, and ASDK…APVL. Asparagine 671 is a glycosylation site (N-linked (GlcNAc...) asparagine). An N-linked (GlcNAc...) asparagine glycan is attached at asparagine 886. Residues asparagine 1269, asparagine 1374, and asparagine 1441 are each glycosylated (N-linked (GlcNAc...) asparagine). The region spanning 1482-1518 is the EGF-like 1; calcium-binding domain; that stretch reads EVDLCYSDPCQNGGTCVRREGGYTCVCPSTHTGQNCE. Disulfide bonds link cysteine 1486-cysteine 1497, cysteine 1491-cysteine 1506, and cysteine 1508-cysteine 1517. The Laminin G-like 1 domain occupies 1556 to 1753; that stretch reads LRARAFGRNS…VADNGTLAGC (198 aa). 3 N-linked (GlcNAc...) asparagine glycosylation sites follow: asparagine 1650, asparagine 1678, and asparagine 1747. Disulfide bonds link cysteine 1727/cysteine 1753, cysteine 1760/cysteine 1771, cysteine 1765/cysteine 1780, and cysteine 1782/cysteine 1791. Residues 1756–1792 enclose the EGF-like 2; calcium-binding domain; sequence KAPLCQSEPCFNGGTCREGWGTYSCECPEGYAGNSCQ. A Laminin G-like 2 domain is found at 1796–1963; sequence PAPWRFSGDG…TIRENVEDGC (168 aa). Asparagine 1843 carries N-linked (GlcNAc...) asparagine glycosylation. 4 cysteine pairs are disulfide-bonded: cysteine 1937-cysteine 1963, cysteine 1969-cysteine 1979, cysteine 1973-cysteine 1988, and cysteine 1990-cysteine 1999. The region spanning 1965–2000 is the EGF-like 3; calcium-binding domain; that stretch reads SRAQCPDHCPNHSSCQSSWDLSTCECDSGYVGTDCA. A glycan (N-linked (GlcNAc...) asparagine) is linked at asparagine 1975. N-linked (GlcNAc...) asparagine glycosylation is found at asparagine 2016, asparagine 2028, asparagine 2071, and asparagine 2088. 4 disulfide bridges follow: cysteine 2092-cysteine 2095, cysteine 2097-cysteine 2114, cysteine 2116-cysteine 2125, and cysteine 2128-cysteine 2140. The Laminin EGF-like domain occupies 2095–2142; the sequence is CDCYSIGSFSGACNPLTGQCECREGVIGRRCDSCSNPYAEVTLSGCEV. N-linked (GlcNAc...) asparagine glycosylation is found at asparagine 2196 and asparagine 2320. Basic and acidic residues predominate over residues 2553–2562; the sequence is QETQRLEIPS. Disordered stretches follow at residues 2553-2582, 2610-2635, and 2654-2684; these read QETQ…STEQ, HEIP…EREP, and VISP…GENE. The segment covering 2567–2579 has biased composition (low complexity); it reads SSSSPSSSSSSGS. The GAIN-B domain maps to 2653–2803; that stretch reads EVISPDSPEM…AVIVDVIDPE (151 aa). Cystine bridges form between cysteine 2747–cysteine 2785 and cysteine 2762–cysteine 2787. The segment at 2747 to 2803 is GPS; it reads CVRWNSFTNQWTRLGCQTEIPDFDGDFNPAAQQAILVNCSCTHISSYAVIVDVIDPE. A glycan (N-linked (GlcNAc...) asparagine) is linked at asparagine 2784. A helical transmembrane segment spans residues 2817 to 2837; it reads YSAFLVSLPLLLGVLLALALL. Over 2838-2845 the chain is Cytoplasmic; that stretch reads RGQQTNSN. Residues 2846–2866 form a helical membrane-spanning segment; sequence TIHQNIVLCVFCAELLFFVGM. Topologically, residues 2867–2883 are extracellular; that stretch reads QSRRQLLESEFPCKLTA. The helical transmembrane segment at 2884–2904 threads the bilayer; sequence ICLHYFWLAAFAWTTVDCVHL. The Cytoplasmic segment spans residues 2905-2919; the sequence is YRMLTEMRDINHGPM. The helical transmembrane segment at 2920 to 2940 threads the bilayer; the sequence is GFYFAMGYGAPAIVVGLSVGV. The Extracellular portion of the chain corresponds to 2941-2959; sequence RAHEYGNSLFCWLSVYEPV. The chain crosses the membrane as a helical span at residues 2960-2980; that stretch reads VWWLVGPIAGMSVVNLLILFV. Over 2981–3000 the chain is Cytoplasmic; it reads SVKAAFTLKDHVLGFGNLRT. The helical transmembrane segment at 3001 to 3021 threads the bilayer; sequence LLWLSVVSLPLMGVMWVLAVL. Topologically, residues 3022-3031 are extracellular; that stretch reads AASEHSQLLS. The chain crosses the membrane as a helical span at residues 3032–3052; it reads LLLSGVVLLHALFCLIGYCII. The Cytoplasmic segment spans residues 3053–3579; the sequence is NKRVRENLQR…RNIDDDETTV (527 aa). Disordered regions lie at residues 3111 to 3225, 3343 to 3377, 3458 to 3486, and 3499 to 3579; these read GISA…TPAY, LYGR…SGSQ, YHQQ…YHFP, and LSHT…ETTV. Residues 3113 to 3128 are compositionally biased toward low complexity; the sequence is SASSTTSRSTAKTSSS. Over residues 3167-3191 the composition is skewed to basic and acidic residues; that stretch reads RGGEEKPSRRQRKDSDSGSETDGRS. Serine 3199 and serine 3200 each carry phosphoserine. Over residues 3208 to 3223 the composition is skewed to polar residues; the sequence is ARSSGTHRSTAVSSTP. Residues 3343–3352 are compositionally biased toward basic and acidic residues; sequence LYGRRGEYPD. The segment covering 3459–3468 has biased composition (low complexity); sequence HQQQQQQQQH. Residues 3469-3482 show a composition bias toward basic and acidic residues; it reads HLQDRLSEGSDKNG. Residues 3501 to 3513 are compositionally biased toward polar residues; the sequence is HTQPPSLHGSQLM.

It belongs to the G-protein coupled receptor 2 family. Interacts with ATP6AP2 (via N-terminus). In the pupal wing, expressed at relatively even levels in all regions. Abundant in 6-9 hours embryos. Expressed at higher levels in pupae than larvae.

It localises to the cell membrane. It is found in the apical cell membrane. In terms of biological role, involved in the fz signaling pathway that controls wing tissue polarity. Also mediates homophilic cell adhesion. May play a role in initiating prehair morphogenesis. May play a critical role in tissue polarity and in formation of normal dendrite fields. During planar cell polarity, stabilizes asymmetric PCP domains together with ATP6AP2. This is Protocadherin-like wing polarity protein stan (stan) from Drosophila melanogaster (Fruit fly).